Here is a 183-residue protein sequence, read N- to C-terminus: MAEQEYEIGEDPSLLIVDDDEPFLRRLARAMEKRGFQPEMAETVAAGKAIASARPPAYAVVDLRLEDGTGLDVVETLREKRPDAKIVVLTGYGAIATAVAAVKVGATDYLSKPADANDVTAALLSNGEALPPPPENPMSADRVRWEHIQRVYEQCDRNVSETARRLNMHRRTLQRILAKRSPR.

The region spanning 13-127 (SLLIVDDDEP…DVTAALLSNG (115 aa)) is the Response regulatory domain. D62 bears the 4-aspartylphosphate mark.

Post-translationally, phosphorylated by RegB.

Functionally, member of the two-component regulatory system RegB/RegA. Involved in transactivating anaerobic expression of the photosynthetic apparatus. It is a transcriptional regulator that is responsible for activating expression of the puf, puh, and puc operons in response to a decrease in oxygen tension. In Rhodovulum sulfidophilum (Rhodobacter sulfidophilus), this protein is Photosynthetic apparatus regulatory protein RegA (regA).